The sequence spans 218 residues: Akirin (218 aa).

The segment at 96–150 (KAIPRSNDFDDDGDQRGDGCSSNYSKAYRAPSSPKSGSDSEGEAPSTSVTDRSSA) is disordered. The segment covering 128–147 (SPKSGSDSEGEAPSTSVTDR) has biased composition (polar residues).

Belongs to the akirin family. In terms of assembly, interacts with hda-1, a component of the NuRD complex. Interacts with let-418, a component of the NuRD and MEC complexes. Interacts with the transcription factor ceh-18. Interacts with ima-2. In terms of tissue distribution, localizes to somatic tissues throughout the body, including muscle cells. Expressed in lateral epithelial seam cells, the hyp7 epidermal syncytium, and multiple head and tail neurons.

It is found in the nucleus. In terms of biological role, molecular adapter that acts as a bridge between a variety of multiprotein complexes, and which is involved in antifungal innate immunity, development of the muscle and sister chromatid cohesion. Plays a role in antifungal innate immunity by acting as a bridge between components of the NuRD (Nucleosome Remodeling and Deacetylase) and MEC chromatin remodeling complexes. NuRD and MEC complexes bind to the promoters of antimicrobial peptide genes and may recruit other proteins such as ceh-18 to control gene expression in response to fungal infection. During meiotic prophase I, plays a role in the disassembly of synaptonemal complex proteins and in the regulation of chromosome condensation and segregation. Together with nuclear import receptor ima-2, required for the import and load of cohesin complex proteins in meiotic nuclei, possibly by acting as a bridge between ima-2 and cohesins. Required for embryonic development of muscle tissue. The protein is Akirin of Caenorhabditis elegans.